Reading from the N-terminus, the 103-residue chain is Large ribosomal subunit protein bL21 (103 aa).

The protein belongs to the bacterial ribosomal protein bL21 family. As to quaternary structure, part of the 50S ribosomal subunit. Contacts protein L20.

In terms of biological role, this protein binds to 23S rRNA in the presence of protein L20. This Teredinibacter turnerae (strain ATCC 39867 / T7901) protein is Large ribosomal subunit protein bL21.